Consider the following 236-residue polypeptide: Rab-like protein 3 (236 aa).

A small GTPase-like region spans residues 1–236; sequence MASLDRVKVL…GGTLKSLHYD (236 aa). GTP is bound by residues 16 to 21, 148 to 150, and 179 to 180; these read GVGKSS, KLD, and DC.

This sequence belongs to the small GTPase superfamily. Rab family. In terms of assembly, homodimer. Interacts with GPR89; the interaction stabilizes GPR89. Interacts with RAP1GDS1.

Its function is as follows. Required for KRAS signaling regulation and modulation of cell proliferation. Regulator of KRAS prenylation, and probably prenylation of other small GTPases. Required for lymphocyte development and function. Not required for myeloid cell development. The chain is Rab-like protein 3 (RABL3) from Bos taurus (Bovine).